The primary structure comprises 1242 residues: ATP-dependent helicase/nuclease subunit A (1242 aa).

The UvrD-like helicase ATP-binding domain occupies 12-487; sequence SRWTDEQWKA…IDLASNFRSR (476 aa). ATP is bound at residue 33–40; it reads AAAGSGKT. Positions 514–808 constitute a UvrD-like helicase C-terminal domain; sequence AAQLKYGADY…RIMTIHSSKG (295 aa).

It belongs to the helicase family. AddA subfamily. Heterodimer of AddA and AddB/RexB. Mg(2+) serves as cofactor.

The catalysed reaction is Couples ATP hydrolysis with the unwinding of duplex DNA by translocating in the 3'-5' direction.. It carries out the reaction ATP + H2O = ADP + phosphate + H(+). The heterodimer acts as both an ATP-dependent DNA helicase and an ATP-dependent, dual-direction single-stranded exonuclease. Recognizes the chi site generating a DNA molecule suitable for the initiation of homologous recombination. The AddA nuclease domain is required for chi fragment generation; this subunit has the helicase and 3' -&gt; 5' nuclease activities. In Geobacillus kaustophilus (strain HTA426), this protein is ATP-dependent helicase/nuclease subunit A.